Consider the following 1371-residue polypeptide: Muzzle protein (1371 aa).

In terms of assembly, homohexamer.

It localises to the virion. In terms of biological role, forms the muzzle assembly at the distal part of the tail. May serve as the gatekeeper to control the ejection of the cargo proteins. The chain is Muzzle protein from Bacteroides intestinalis (Bacteroides phage PhiCrAss001).